The following is an 800-amino-acid chain: Protein SPT2 homolog (800 aa).

The tract at residues 1–687 is important for interaction with DNA; sequence MDFHSVLRMA…PGHRPNMQPP (687 aa). Positions 53–82 form a coiled coil; that stretch reads QEIQNKEVEAKRKKEGLLAKRKELKHDRKA. Disordered regions lie at residues 70–173, 197–646, and 661–698; these read LAKR…PALN, KEER…MAKP, and VPKSINGHMNGMRSAVPPGHRPNMQPPGRPLPPITSSY. The segment covering 124-137 has biased composition (acidic residues); sequence TEEDEEYMTEEELY. Residues 155–164 show a composition bias toward low complexity; it reads PQKVAKAAPG. A coiled-coil region spans residues 196 to 224; the sequence is KKEERLRTAEELKELEFLERKAQKADRKD. 2 stretches are compositionally biased toward basic and acidic residues: residues 197–226 and 249–259; these read KEERLRTAEELKELEFLERKAQKADRKDPM and HSVEKRSHENS. Residues 260–272 are compositionally biased toward polar residues; the sequence is KSSSTEQNGTFRK. Basic and acidic residues predominate over residues 273–295; sequence SSSDNRSREEKSGSVFHTKDSKF. 5 stretches are compositionally biased toward low complexity: residues 328–360, 367–377, 390–424, 443–501, and 514–581; these read SGSTSLRPSSGGSSSVSGRPSGSSEKPGSSSGK, SSSARSSSGSG, GASGSGSARSVGESGSRSGKPTGASGSGLARSVGA, GVSG…SVSG, and GAPG…ASSS. A compositionally biased stretch (polar residues) spans 608-626; that stretch reads NSVRHNTTSISVSARSSLG. Pro residues predominate over residues 684–693; the sequence is MQPPGRPLPP. The important for interaction with histones stretch occupies residues 688–800; it reads GRPLPPITSS…LKSAKKMKSR (113 aa). Positions 756–800 form a coiled coil; the sequence is REQQKEEARSLRLGIQEDLEELRREEEELKQKAKQLKSAKKMKSR.

Belongs to the SPT2 family. In terms of assembly, interacts with histones. Interacts with a heterotetrameric complex formed by histone H3 and H4, especially when the histone tetramer is not bound to DNA.

Its subcellular location is the nucleus. The protein resides in the nucleolus. Histone chaperone that stabilizes pre-existing histone tetramers and regulates replication-independent histone exchange on chromatin. Required for normal chromatin refolding in the coding region of transcribed genes, and for the suppression of spurious transcription. Binds DNA and histones and promotes nucleosome assembly (in vitro). Facilitates formation of tetrameric histone complexes containing histone H3 and H4. Modulates RNA polymerase 1-mediated transcription. Binds DNA, with a preference for branched DNA species, such as Y-form DNA and Holliday junction DNA. The protein is Protein SPT2 homolog (spty2d1) of Xenopus laevis (African clawed frog).